Reading from the N-terminus, the 475-residue chain is UDP-N-acetylmuramate--L-alanine ligase (475 aa).

118–124 serves as a coordination point for ATP; that stretch reads GTHGKTT.

Belongs to the MurCDEF family.

The protein resides in the cytoplasm. The enzyme catalyses UDP-N-acetyl-alpha-D-muramate + L-alanine + ATP = UDP-N-acetyl-alpha-D-muramoyl-L-alanine + ADP + phosphate + H(+). The protein operates within cell wall biogenesis; peptidoglycan biosynthesis. Cell wall formation. This is UDP-N-acetylmuramate--L-alanine ligase from Thermosynechococcus vestitus (strain NIES-2133 / IAM M-273 / BP-1).